Consider the following 606-residue polypeptide: Aspartate--tRNA(Asp/Asn) ligase (606 aa).

Glu196 contacts L-aspartate. An aspartate region spans residues 220-223 (QIFK). Residue Arg242 participates in L-aspartate binding. ATP-binding positions include 242 to 244 (RDE) and Gln251. Residue His465 participates in L-aspartate binding. Residue Glu499 participates in ATP binding. Residue Arg506 coordinates L-aspartate. An ATP-binding site is contributed by 551–554 (GMDR).

Belongs to the class-II aminoacyl-tRNA synthetase family. Type 1 subfamily. As to quaternary structure, homodimer.

Its subcellular location is the cytoplasm. The catalysed reaction is tRNA(Asx) + L-aspartate + ATP = L-aspartyl-tRNA(Asx) + AMP + diphosphate. In terms of biological role, aspartyl-tRNA synthetase with relaxed tRNA specificity since it is able to aspartylate not only its cognate tRNA(Asp) but also tRNA(Asn). Reaction proceeds in two steps: L-aspartate is first activated by ATP to form Asp-AMP and then transferred to the acceptor end of tRNA(Asp/Asn). This chain is Aspartate--tRNA(Asp/Asn) ligase, found in Oleidesulfovibrio alaskensis (strain ATCC BAA-1058 / DSM 17464 / G20) (Desulfovibrio alaskensis).